Here is a 223-residue protein sequence, read N- to C-terminus: Endonuclease V (223 aa).

Mg(2+)-binding residues include aspartate 44 and aspartate 109.

It belongs to the endonuclease V family. The cofactor is Mg(2+).

The protein resides in the cytoplasm. It catalyses the reaction Endonucleolytic cleavage at apurinic or apyrimidinic sites to products with a 5'-phosphate.. In terms of biological role, DNA repair enzyme involved in the repair of deaminated bases. Selectively cleaves double-stranded DNA at the second phosphodiester bond 3' to a deoxyinosine leaving behind the intact lesion on the nicked DNA. In Methanothrix thermoacetophila (strain DSM 6194 / JCM 14653 / NBRC 101360 / PT) (Methanosaeta thermophila), this protein is Endonuclease V.